A 102-amino-acid polypeptide reads, in one-letter code: RNA-binding protein Hfq (102 aa).

Residues 9–68 form the Sm domain; sequence DPFLNALRRERVPVSIYLVNGIKLQGQIESFDQFVILLKNTVSQMVYKHAISTVVPSRPV. The disordered stretch occupies residues 63–102; sequence VPSRPVSHHSNNAGGGASNNYHHGSNVQGSTAQQDSEETE. Residues 70–88 show a composition bias toward low complexity; sequence HHSNNAGGGASNNYHHGSN.

This sequence belongs to the Hfq family. In terms of assembly, homohexamer.

Its function is as follows. RNA chaperone that binds small regulatory RNA (sRNAs) and mRNAs to facilitate mRNA translational regulation in response to envelope stress, environmental stress and changes in metabolite concentrations. Also binds with high specificity to tRNAs. This is RNA-binding protein Hfq from Salmonella choleraesuis (strain SC-B67).